The primary structure comprises 226 residues: MKSATRSASSPFFIPEETGAVRPIGGMAKRSFDVLAASVALLLFSPLFLLIMALVKFSDGGSVFYGHRRIGHNGQSFKCLKFRTMMEKGDEVLEEFFRINPDAYEEWRATRKLQNDPRVTVVGAVLRKLSLDELPQLLNIIRGEMSVVGPRPVVEDELELYDSAAVFYLRSRPGLTGLWQISGRNDVSYATRVAFDTQYVQNWSLFADLVIVFKTIPAVCLSRGSY.

A helical membrane pass occupies residues 34–54 (VLAASVALLLFSPLFLLIMAL).

It belongs to the bacterial sugar transferase family.

The protein resides in the cell membrane. The protein operates within glycan metabolism; exopolysaccharide biosynthesis. In terms of biological role, needed for the addition of the first sugar (galactose) to the isoprenoid carrier. May function as a sugar transferase. This is Exopolysaccharide production protein ExoY (exoY) from Rhizobium meliloti (strain 1021) (Ensifer meliloti).